Reading from the N-terminus, the 157-residue chain is SsrA-binding protein (157 aa).

Belongs to the SmpB family.

It is found in the cytoplasm. In terms of biological role, required for rescue of stalled ribosomes mediated by trans-translation. Binds to transfer-messenger RNA (tmRNA), required for stable association of tmRNA with ribosomes. tmRNA and SmpB together mimic tRNA shape, replacing the anticodon stem-loop with SmpB. tmRNA is encoded by the ssrA gene; the 2 termini fold to resemble tRNA(Ala) and it encodes a 'tag peptide', a short internal open reading frame. During trans-translation Ala-aminoacylated tmRNA acts like a tRNA, entering the A-site of stalled ribosomes, displacing the stalled mRNA. The ribosome then switches to translate the ORF on the tmRNA; the nascent peptide is terminated with the 'tag peptide' encoded by the tmRNA and targeted for degradation. The ribosome is freed to recommence translation, which seems to be the essential function of trans-translation. This is SsrA-binding protein from Elusimicrobium minutum (strain Pei191).